The primary structure comprises 309 residues: Protein FdhE homolog (309 aa).

It belongs to the FdhE family.

It is found in the cytoplasm. In terms of biological role, necessary for formate dehydrogenase activity. The chain is Protein FdhE homolog from Citrobacter koseri (strain ATCC BAA-895 / CDC 4225-83 / SGSC4696).